Consider the following 53-residue polypeptide: UPF0391 membrane protein SG0393 (53 aa).

2 helical membrane-spanning segments follow: residues 4-24 (WGIIFLVIALIAAALGFGGLA) and 27-47 (AAWAAKIVFVVGIILFLISLF).

This sequence belongs to the UPF0391 family.

It is found in the cell membrane. The protein is UPF0391 membrane protein SG0393 of Sodalis glossinidius (strain morsitans).